Reading from the N-terminus, the 512-residue chain is Maturase K (512 aa).

This sequence belongs to the intron maturase 2 family. MatK subfamily.

The protein resides in the plastid. It localises to the chloroplast. In terms of biological role, usually encoded in the trnK tRNA gene intron. Probably assists in splicing its own and other chloroplast group II introns. The sequence is that of Maturase K from Zantedeschia aethiopica (White calla lily).